A 324-amino-acid polypeptide reads, in one-letter code: MGPWGEPELLVWRPEAAASEAPVPMGLEVKLGALVLLLVLTLICSLVPVCVLRRPGANPEASASRQKALSLVSCFAGGVFLATCLLDLLPDYLGAIDEALAALHVTLQFPLQEFILAMGFFLVLVMEQITLAYKEQSGPPPREETRALLGTVNGGPQHWHDGLGVPQAGGASSAPSALRACVLVFSLALHSVFEGLAVGLQRDQARAMELCLALLLHKGILAVSLSLRLLQSHLRAQVVAGCGILFSCMTPLGIGLGTALAESAGPLHQLAQSVLEGMAAGTFLYITFLEILPQELATSEQRILKVILLLAGFALLTGLLFIQI.

The Extracellular segment spans residues 1 to 30; sequence MGPWGEPELLVWRPEAAASEAPVPMGLEVK. Residues 31 to 51 form a helical membrane-spanning segment; sequence LGALVLLLVLTLICSLVPVCV. The Cytoplasmic segment spans residues 52–68; it reads LRRPGANPEASASRQKA. The helical transmembrane segment at 69-89 threads the bilayer; sequence LSLVSCFAGGVFLATCLLDLL. Residues 90–104 lie on the Extracellular side of the membrane; sequence PDYLGAIDEALAALH. Residues 105-125 form a helical membrane-spanning segment; that stretch reads VTLQFPLQEFILAMGFFLVLV. The Cytoplasmic segment spans residues 126–179; that stretch reads MEQITLAYKEQSGPPPREETRALLGTVNGGPQHWHDGLGVPQAGGASSAPSALR. Residues 180 to 200 form a helical membrane-spanning segment; that stretch reads ACVLVFSLALHSVFEGLAVGL. The Extracellular segment spans residues 201–206; sequence QRDQAR. The chain crosses the membrane as a helical span at residues 207–227; the sequence is AMELCLALLLHKGILAVSLSL. Residues 228–237 are Cytoplasmic-facing; it reads RLLQSHLRAQ. The chain crosses the membrane as a helical span at residues 238-258; it reads VVAGCGILFSCMTPLGIGLGT. Residues 259 to 272 lie on the Extracellular side of the membrane; sequence ALAESAGPLHQLAQ. A helical transmembrane segment spans residues 273–293; the sequence is SVLEGMAAGTFLYITFLEILP. Over 294 to 303 the chain is Cytoplasmic; that stretch reads QELATSEQRI. The chain crosses the membrane as a helical span at residues 304 to 324; it reads LKVILLLAGFALLTGLLFIQI.

It belongs to the ZIP transporter (TC 2.A.5) family.

The protein localises to the cell membrane. The protein resides in the endoplasmic reticulum membrane. It catalyses the reaction Zn(2+)(in) = Zn(2+)(out). Transporter for the divalent cation Zn(2+). Mediates the influx of Zn(2+) into cells from extracellular space. This chain is Zinc transporter ZIP1 (SLC39A1), found in Bos taurus (Bovine).